The sequence spans 211 residues: Probable nicotinate-nucleotide adenylyltransferase (211 aa).

This sequence belongs to the NadD family.

The catalysed reaction is nicotinate beta-D-ribonucleotide + ATP + H(+) = deamido-NAD(+) + diphosphate. The protein operates within cofactor biosynthesis; NAD(+) biosynthesis; deamido-NAD(+) from nicotinate D-ribonucleotide: step 1/1. Catalyzes the reversible adenylation of nicotinate mononucleotide (NaMN) to nicotinic acid adenine dinucleotide (NaAD). In Shewanella sediminis (strain HAW-EB3), this protein is Probable nicotinate-nucleotide adenylyltransferase.